Here is a 364-residue protein sequence, read N- to C-terminus: Putative agmatine deiminase (364 aa).

The active-site Amidino-cysteine intermediate is Cys355.

Belongs to the agmatine deiminase family.

It catalyses the reaction agmatine + H2O = N-carbamoylputrescine + NH4(+). The polypeptide is Putative agmatine deiminase (Mycoplasma mycoides subsp. mycoides SC (strain CCUG 32753 / NCTC 10114 / PG1)).